A 223-amino-acid polypeptide reads, in one-letter code: Translation initiation factor 6 (223 aa).

The protein belongs to the eIF-6 family.

In terms of biological role, binds to the 50S ribosomal subunit and prevents its association with the 30S ribosomal subunit to form the 70S initiation complex. This is Translation initiation factor 6 from Thermofilum pendens (strain DSM 2475 / Hrk 5).